We begin with the raw amino-acid sequence, 510 residues long: MSRELVIVLDFGGQYSRLIARRIREHNVYCEIYPYNISINKLKQLSPAAIVLSGGPSSVYQEGSPDLDTEIFEIGIPVLGICYGMQLMAKKLGGTVTGSTKREYGKALLEIENPNLLTEGVSSDLLVWMSHGDSVEQVPPGFKVMGKTENTPIAGLFNPDKNLYGVQFHLEVMHTPKGREMLKNFLFNIADLSADWTMGSYIEETVEQIKTEAQGRKAVCGLSGGIDSTVAALLVQKAIGDDLTCIFVNHGLLRKNEQDQVRELFEQEFDINLVYVDASDRFLNKLQGVTDPEQKRKIIGEEFIRVFEEEARKIGDVDFLVQGTLYTDVVESGTETASVIKSHHNVGGLPEKMDLSLIEPLNSLFKDEVRQVARELGLHREIVERHPFPGPGLAIRVLGEITKEKLDILREADAVVSDELKKIGLYHDIWQLFTVLPDIKTVGVKGDERSYDYPIILRAVNSEDGMTADWYRFSNDVLERLSNRVVNEVDGVNRFIYDITSKPPATIEWE.

The Glutamine amidotransferase type-1 domain maps to 5 to 195 (LVIVLDFGGQ…LFNIADLSAD (191 aa)). C82 acts as the Nucleophile in catalysis. Residues H169 and E171 contribute to the active site. A GMPS ATP-PPase domain is found at 196–385 (WTMGSYIEET…LGLHREIVER (190 aa)). 223-229 (SGGIDST) contacts ATP.

As to quaternary structure, homodimer.

It catalyses the reaction XMP + L-glutamine + ATP + H2O = GMP + L-glutamate + AMP + diphosphate + 2 H(+). It functions in the pathway purine metabolism; GMP biosynthesis; GMP from XMP (L-Gln route): step 1/1. Its function is as follows. Catalyzes the synthesis of GMP from XMP. The sequence is that of GMP synthase [glutamine-hydrolyzing] from Natranaerobius thermophilus (strain ATCC BAA-1301 / DSM 18059 / JW/NM-WN-LF).